Consider the following 501-residue polypeptide: Lysine--tRNA ligase (501 aa).

Mg(2+) is bound by residues E412 and E419.

This sequence belongs to the class-II aminoacyl-tRNA synthetase family. In terms of assembly, homodimer. Mg(2+) serves as cofactor.

Its subcellular location is the cytoplasm. The catalysed reaction is tRNA(Lys) + L-lysine + ATP = L-lysyl-tRNA(Lys) + AMP + diphosphate. In Dechloromonas aromatica (strain RCB), this protein is Lysine--tRNA ligase.